Reading from the N-terminus, the 158-residue chain is 2-C-methyl-D-erythritol 2,4-cyclodiphosphate synthase (158 aa).

Positions 10 and 12 each coordinate a divalent metal cation. 4-CDP-2-C-methyl-D-erythritol 2-phosphate contacts are provided by residues 10-12 (DVH) and 36-37 (HS). A divalent metal cation is bound at residue His44. 4-CDP-2-C-methyl-D-erythritol 2-phosphate is bound by residues 58 to 60 (DIG), 63 to 67 (FSDTD), and Arg144.

The protein belongs to the IspF family. Homotrimer. Requires a divalent metal cation as cofactor.

The catalysed reaction is 4-CDP-2-C-methyl-D-erythritol 2-phosphate = 2-C-methyl-D-erythritol 2,4-cyclic diphosphate + CMP. It participates in isoprenoid biosynthesis; isopentenyl diphosphate biosynthesis via DXP pathway; isopentenyl diphosphate from 1-deoxy-D-xylulose 5-phosphate: step 4/6. In terms of biological role, involved in the biosynthesis of isopentenyl diphosphate (IPP) and dimethylallyl diphosphate (DMAPP), two major building blocks of isoprenoid compounds. Catalyzes the conversion of 4-diphosphocytidyl-2-C-methyl-D-erythritol 2-phosphate (CDP-ME2P) to 2-C-methyl-D-erythritol 2,4-cyclodiphosphate (ME-CPP) with a corresponding release of cytidine 5-monophosphate (CMP). This chain is 2-C-methyl-D-erythritol 2,4-cyclodiphosphate synthase, found in Burkholderia vietnamiensis (strain G4 / LMG 22486) (Burkholderia cepacia (strain R1808)).